The primary structure comprises 341 residues: Serpentine receptor class epsilon-8 (341 aa).

7 consecutive transmembrane segments (helical) span residues 37–57, 64–86, 101–123, 143–163, 169–189, 235–255, and 264–284; these read VGFL…FIFI, LTFL…CIIV, WILV…LPIF, IWVS…SAIA, IPVV…YIGI, VQIS…MDHF, and WSYV…PIIL.

This sequence belongs to the nematode receptor-like protein sre family.

The protein localises to the membrane. The polypeptide is Serpentine receptor class epsilon-8 (sre-8) (Caenorhabditis elegans).